The following is a 297-amino-acid chain: N-acetylmuramic acid 6-phosphate etherase (297 aa).

The SIS domain occupies 55-218; that stretch reads AVAALKSGGR…STGAMVKFGK (164 aa). Residue E83 is the Proton donor of the active site. E114 is an active-site residue.

This sequence belongs to the GCKR-like family. MurNAc-6-P etherase subfamily. Homodimer.

The enzyme catalyses N-acetyl-D-muramate 6-phosphate + H2O = N-acetyl-D-glucosamine 6-phosphate + (R)-lactate. The protein operates within amino-sugar metabolism; 1,6-anhydro-N-acetylmuramate degradation. Its pathway is amino-sugar metabolism; N-acetylmuramate degradation. It participates in cell wall biogenesis; peptidoglycan recycling. Its function is as follows. Specifically catalyzes the cleavage of the D-lactyl ether substituent of MurNAc 6-phosphate, producing GlcNAc 6-phosphate and D-lactate. Together with AnmK, is also required for the utilization of anhydro-N-acetylmuramic acid (anhMurNAc) either imported from the medium or derived from its own cell wall murein, and thus plays a role in cell wall recycling. The polypeptide is N-acetylmuramic acid 6-phosphate etherase (Salmonella dublin (strain CT_02021853)).